We begin with the raw amino-acid sequence, 93 residues long: uncharacterized protein (93 aa).

A disordered region spans residues 73–93 (KWTVSGPVKQDTGKTDPAEKN). Basic and acidic residues predominate over residues 83-93 (DTGKTDPAEKN).

This is an uncharacterized protein from Rhodobacter capsulatus (Rhodopseudomonas capsulata).